Consider the following 101-residue polypeptide: Large ribosomal subunit protein uL23 (101 aa).

Belongs to the universal ribosomal protein uL23 family. As to quaternary structure, part of the 50S ribosomal subunit. Contacts protein L29, and trigger factor when it is bound to the ribosome.

One of the early assembly proteins it binds 23S rRNA. One of the proteins that surrounds the polypeptide exit tunnel on the outside of the ribosome. Forms the main docking site for trigger factor binding to the ribosome. In Wigglesworthia glossinidia brevipalpis, this protein is Large ribosomal subunit protein uL23.